Here is a 272-residue protein sequence, read N- to C-terminus: Orotidine 5'-phosphate decarboxylase (272 aa).

K95 functions as the Proton donor in the catalytic mechanism.

This sequence belongs to the OMP decarboxylase family. Type 2 subfamily.

The enzyme catalyses orotidine 5'-phosphate + H(+) = UMP + CO2. The protein operates within pyrimidine metabolism; UMP biosynthesis via de novo pathway; UMP from orotate: step 2/2. This is Orotidine 5'-phosphate decarboxylase from Bordetella avium (strain 197N).